Consider the following 417-residue polypeptide: NADH-quinone oxidoreductase subunit F (417 aa).

Residue 54–63 (GRGGAGFSTG) coordinates NAD(+). Residue 166–213 (GAGAYICGEETALLESLEGKKGMPRLKPPFPAGFGLYGCPTTINNVES) coordinates FMN. [4Fe-4S] cluster-binding residues include cysteine 345, cysteine 348, cysteine 351, and cysteine 391.

This sequence belongs to the complex I 51 kDa subunit family. The cofactor is FMN. It depends on [4Fe-4S] cluster as a cofactor.

The catalysed reaction is a quinone + NADH + 5 H(+)(in) = a quinol + NAD(+) + 4 H(+)(out). Functionally, NDH-1 shuttles electrons from NADH, via FMN and iron-sulfur (Fe-S) centers, to quinones in the respiratory chain. Couples the redox reaction to proton translocation (for every two electrons transferred, four hydrogen ions are translocated across the cytoplasmic membrane), and thus conserves the redox energy in a proton gradient. This chain is NADH-quinone oxidoreductase subunit F (nuoF), found in Rickettsia bellii (strain OSU 85-389).